A 137-amino-acid polypeptide reads, in one-letter code: Large ribosomal subunit protein uL16 (137 aa).

Belongs to the universal ribosomal protein uL16 family. As to quaternary structure, part of the 50S ribosomal subunit.

Binds 23S rRNA and is also seen to make contacts with the A and possibly P site tRNAs. The polypeptide is Large ribosomal subunit protein uL16 (Methylococcus capsulatus (strain ATCC 33009 / NCIMB 11132 / Bath)).